We begin with the raw amino-acid sequence, 671 residues long: UvrABC system protein B (671 aa).

In terms of domain architecture, Helicase ATP-binding spans 26–183; that stretch reads EGLENGLAHQ…RRLSELQYSR (158 aa). Residue 39-46 participates in ATP binding; sequence GVTGSGKT. Residues 92–115 carry the Beta-hairpin motif; that stretch reads YYDYYQPEAYVPSSDTFIEKDASV. One can recognise a Helicase C-terminal domain in the interval 431 to 593; that stretch reads QVDDLLSEIR…IIPQGLNKKI (163 aa). In terms of domain architecture, UVR spans 631-666; that stretch reads DQKIRELEAKMYTYAQNLEFEQAAELRDQVHQLRQQ.

The protein belongs to the UvrB family. In terms of assembly, forms a heterotetramer with UvrA during the search for lesions. Interacts with UvrC in an incision complex.

The protein localises to the cytoplasm. Functionally, the UvrABC repair system catalyzes the recognition and processing of DNA lesions. A damage recognition complex composed of 2 UvrA and 2 UvrB subunits scans DNA for abnormalities. Upon binding of the UvrA(2)B(2) complex to a putative damaged site, the DNA wraps around one UvrB monomer. DNA wrap is dependent on ATP binding by UvrB and probably causes local melting of the DNA helix, facilitating insertion of UvrB beta-hairpin between the DNA strands. Then UvrB probes one DNA strand for the presence of a lesion. If a lesion is found the UvrA subunits dissociate and the UvrB-DNA preincision complex is formed. This complex is subsequently bound by UvrC and the second UvrB is released. If no lesion is found, the DNA wraps around the other UvrB subunit that will check the other stand for damage. The protein is UvrABC system protein B of Yersinia pestis bv. Antiqua (strain Antiqua).